We begin with the raw amino-acid sequence, 141 residues long: 16 kDa protein (141 aa).

The segment at 97-119 (ASATVKKSHKSKPSKKKFKERKD) is disordered. The segment covering 102-115 (KKSHKSKPSKKKFK) has biased composition (basic residues).

This chain is 16 kDa protein, found in Beta vulgaris (Sugar beet).